We begin with the raw amino-acid sequence, 394 residues long: Phosphoglycerate kinase (394 aa).

Residues 21 to 23 (DFN), R36, 59 to 62 (HLGR), R118, and R151 contribute to the substrate site. Phosphoserine is present on S183. K201 is a binding site for ATP. T299 is subject to Phosphothreonine. ATP-binding positions include N316, E323, and 350-353 (GGDS).

The protein belongs to the phosphoglycerate kinase family. In terms of assembly, monomer.

It localises to the cytoplasm. The catalysed reaction is (2R)-3-phosphoglycerate + ATP = (2R)-3-phospho-glyceroyl phosphate + ADP. The protein operates within carbohydrate degradation; glycolysis; pyruvate from D-glyceraldehyde 3-phosphate: step 2/5. The chain is Phosphoglycerate kinase from Geobacillus stearothermophilus (Bacillus stearothermophilus).